Reading from the N-terminus, the 379-residue chain is Transcription termination factor 1b, mitochondrial (379 aa).

The transit peptide at 1–37 (MASRNIWCVRRNFLFDLRGWMLQYSAEVFLKSISFRT) directs the protein to the mitochondrion. Interaction with DNA regions lie at residues 151–152 (RS), 229–233 (QSTKR), 306–313 (SEKKFNDK), 337–340 (SINT), and 366–373 (SQRRYEAK).

The protein belongs to the mTERF family. In terms of assembly, monomer. In terms of processing, phosphoprotein with mostly four phosphate groups. While the DNA-binding activity is unaffected by the phosphorylation state, only the phosphorylated form of the protein is active for termination activity. Functioning seems to be regulated by phosphorylation. In terms of tissue distribution, expressed strongly in the heart and at lower levels in brain, liver and kidney.

Its subcellular location is the mitochondrion. Functionally, transcription termination factor. Binds to a 28 bp region within the tRNA(Leu(uur)) gene at a position immediately adjacent to and downstream of the 16S rRNA gene; this region comprises a tridecamer sequence critical for directing accurate termination. Binds DNA along the major grove and promotes DNA bending and partial unwinding. Promotes base flipping. Transcription termination activity appears to be polarized with highest specificity for transcripts initiated on the light strand. This chain is Transcription termination factor 1b, mitochondrial, found in Mus musculus (Mouse).